A 160-amino-acid polypeptide reads, in one-letter code: Cyclic pyranopterin monophosphate synthase (160 aa).

Substrate-binding positions include 74–76 (LSH) and 112–113 (ME). D127 is an active-site residue.

It belongs to the MoaC family. As to quaternary structure, homohexamer; trimer of dimers.

It catalyses the reaction (8S)-3',8-cyclo-7,8-dihydroguanosine 5'-triphosphate = cyclic pyranopterin phosphate + diphosphate. The protein operates within cofactor biosynthesis; molybdopterin biosynthesis. Catalyzes the conversion of (8S)-3',8-cyclo-7,8-dihydroguanosine 5'-triphosphate to cyclic pyranopterin monophosphate (cPMP). The protein is Cyclic pyranopterin monophosphate synthase of Trichlorobacter lovleyi (strain ATCC BAA-1151 / DSM 17278 / SZ) (Geobacter lovleyi).